The chain runs to 61 residues: Ferredoxin (61 aa).

The region spanning L2–E28 is the 4Fe-4S ferredoxin-type domain. [4Fe-4S] cluster is bound by residues C8, C11, C14, C18, C37, C40, C49, and C53.

Requires [4Fe-4S] cluster as cofactor.

In terms of biological role, ferredoxins are iron-sulfur proteins that transfer electrons in a wide variety of metabolic reactions. The chain is Ferredoxin from Chlorobaculum thiosulfatiphilum (Chlorobium limicola f.sp. thiosulfatophilum).